We begin with the raw amino-acid sequence, 453 residues long: Serine incorporator 1 (453 aa).

Glycine 2 carries the N-myristoyl glycine lipid modification. Residues 2–39 are Cytoplasmic-facing; the sequence is GSVLGLCSMASWIPCLCGSAPCLLCRCCPSGNNSTVTR. A helical transmembrane segment spans residues 40-60; it reads LIYALFLLVGVCVACVMLIPG. The Lumenal portion of the chain corresponds to 61–88; it reads MEEQLNKIPGFCENEKGMVPCNILVGYK. The chain crosses the membrane as a helical span at residues 89–109; it reads AVYRLCFGLAMFYLLLSLLMI. The Cytoplasmic segment spans residues 110 to 123; the sequence is KVKSSSDPRAAIHN. Residues 124–144 traverse the membrane as a helical segment; it reads GFWFFKFAAAIAIIIGAFFIP. At 145–151 the chain is on the lumenal side; that stretch reads EGTFTTV. A helical membrane pass occupies residues 152–172; the sequence is WFYVGMAGAFCFILIQLVLLI. Residues 173 to 197 lie on the Cytoplasmic side of the membrane; sequence DFAHSWNESWVEKMEEGNSRCWYAA. Residues 198–218 traverse the membrane as a helical segment; that stretch reads LLSATALNYLLSLVAVVLFFV. Residues 219-231 lie on the Lumenal side of the membrane; the sequence is YYTHPASCAENKA. The chain crosses the membrane as a helical span at residues 232–252; sequence FISVNMLLCLGASIMSILPKI. Residues 253–259 are Cytoplasmic-facing; it reads QESQPRS. Residues 260–280 form a helical membrane-spanning segment; that stretch reads GLLQSSVITVYTMYLTWSAMT. The Lumenal portion of the chain corresponds to 281–309; that stretch reads NEPETECNPSLLNIIGYNTTSTVSKEGQS. The helical transmembrane segment at 310-330 threads the bilayer; that stretch reads VQWWHTQGIIGLILFLLCVFY. The Cytoplasmic segment spans residues 331-387; the sequence is SSIRTSNNSQVNKLTLTSDESTLIEDGGARNDGSLEDGDDVHRAVDNERDGVTYSYS. Position 351 is a phosphoserine (serine 351). Position 352 is a phosphothreonine (threonine 352). Serine 364 carries the phosphoserine modification. A helical transmembrane segment spans residues 388-408; that stretch reads FFHFMLFLASLYIMMTLTNWY. Residues 409 to 426 are Lumenal-facing; that stretch reads RYEPSREMKSQWTAVWVK. The chain crosses the membrane as a helical span at residues 427–447; the sequence is ISSSWIGIVLYVWTLVAPLVL. Residues 448-453 are Cytoplasmic-facing; the sequence is TNRDFD.

The protein belongs to the TDE1 family. As to quaternary structure, interacts with SPTLC1.

Its subcellular location is the endoplasmic reticulum membrane. Its function is as follows. Enhances the incorporation of serine into phosphatidylserine and sphingolipids. The chain is Serine incorporator 1 (SERINC1) from Bos taurus (Bovine).